The primary structure comprises 238 residues: LexA repressor (238 aa).

Positions 26-46 (FDEMKDALELRSKSGIHRLIS) form a DNA-binding region, H-T-H motif. Residues S159 and K197 each act as for autocatalytic cleavage activity in the active site.

Belongs to the peptidase S24 family. As to quaternary structure, homodimer.

It carries out the reaction Hydrolysis of Ala-|-Gly bond in repressor LexA.. Its function is as follows. Represses a number of genes involved in the response to DNA damage (SOS response), including recA and lexA. In the presence of single-stranded DNA, RecA interacts with LexA causing an autocatalytic cleavage which disrupts the DNA-binding part of LexA, leading to derepression of the SOS regulon and eventually DNA repair. The protein is LexA repressor of Gluconobacter oxydans (strain 621H) (Gluconobacter suboxydans).